Consider the following 226-residue polypeptide: PKHD-type hydroxylase TERTU_2553 (226 aa).

The Fe2OG dioxygenase domain maps to 78–177 (KIYPPKFNCY…RVASFIWIQS (100 aa)). His-96, Asp-98, and His-158 together coordinate Fe cation. 2-oxoglutarate is bound at residue Arg-168.

It depends on Fe(2+) as a cofactor. L-ascorbate is required as a cofactor.

This chain is PKHD-type hydroxylase TERTU_2553, found in Teredinibacter turnerae (strain ATCC 39867 / T7901).